A 440-amino-acid polypeptide reads, in one-letter code: Frizzled/smoothened-like sans CRD protein D (440 aa).

The first 27 residues, 1–27 (MFIILKFLISFFLICNFFNYNDHFASG), serve as a signal peptide directing secretion. Over 28–85 (QTLPPGFCPSPLIYRNSTNRQNDIENGYLFIGQTNCTSPCPSLIFSENEWHRVYNMSL) the chain is Extracellular. Asn-43, Asn-62, and Asn-82 each carry an N-linked (GlcNAc...) asparagine glycan. Residues 86–106 (IAGTISMFALIFLIITYSPLV) traverse the membrane as a helical segment. The Cytoplasmic segment spans residues 107 to 110 (NKYN). Residues 111-131 (GYTRHTVGILFLFCGIFLTVT) form a helical membrane-spanning segment. Residues 132–162 (TDGRQLWDIDLGFEKYCPEPGRFARQSDTKC) are Extracellular-facing. A helical membrane pass occupies residues 163–183 (LVTAIFFQYGCVTSILWWAAI). Residues 184–200 (SVDLWMTIRKVKISKLQ) lie on the Cytoplasmic side of the membrane. The helical transmembrane segment at 201-221 (FITYAVILNIITLILTFAPIA) threads the bilayer. Over 222 to 244 (SKQYGYGEAAIGCWLMDLKYQVG) the chain is Extracellular. A helical membrane pass occupies residues 245–265 (YFWAPVGFCLCVGCVSIVLII). The Cytoplasmic portion of the chain corresponds to 266–285 (REIYKVSDAIKKKLLAKHLK). The helical transmembrane segment at 286–306 (PLMLIILMLSEFIYMFIFYSY) threads the bilayer. Residues 307–346 (TTSRRGHYHDVVEKYIRCLFINASNPSICEVDVSISSPAH) are Extracellular-facing. Asn-328 carries an N-linked (GlcNAc...) asparagine glycan. The chain crosses the membrane as a helical span at residues 347–367 (FFFHFCMRLMGIEGLIFFGFT). At 368 to 440 (RQTKRIWLRS…IELSGVDSKN (73 aa)) the chain is on the cytoplasmic side. The interval 395–428 (ISSDEKTSNSSHRTTRGCRETEFGESIEQSNDPE) is disordered.

It belongs to the G-protein coupled receptor Fz/Smo family.

The protein localises to the membrane. This chain is Frizzled/smoothened-like sans CRD protein D (fscD), found in Dictyostelium discoideum (Social amoeba).